Reading from the N-terminus, the 70-residue chain is Ribosome modulation factor (70 aa).

The protein belongs to the ribosome modulation factor family.

It is found in the cytoplasm. Its function is as follows. During stationary phase, converts 70S ribosomes to an inactive dimeric form (100S ribosomes). In Marinobacter adhaerens (strain DSM 23420 / HP15), this protein is Ribosome modulation factor.